The sequence spans 48 residues: Large ribosomal subunit protein bL32 (48 aa).

The segment covering 1–20 has biased composition (basic residues); it reads MAVPKRRVSKTRAAKRRTHY. Positions 1–48 are disordered; sequence MAVPKRRVSKTRAAKRRTHYKVSLPIPVKDKDGSWKLPHRINTKTGEY.

The protein belongs to the bacterial ribosomal protein bL32 family.

The protein is Large ribosomal subunit protein bL32 of Campylobacter hominis (strain ATCC BAA-381 / DSM 21671 / CCUG 45161 / LMG 19568 / NCTC 13146 / CH001A).